Reading from the N-terminus, the 320-residue chain is Ribosomal RNA small subunit methyltransferase H (320 aa).

Residues 42–44 (GGH), Asp62, Phe86, Asp108, and Gln115 contribute to the S-adenosyl-L-methionine site.

The protein belongs to the methyltransferase superfamily. RsmH family.

The protein localises to the cytoplasm. It catalyses the reaction cytidine(1402) in 16S rRNA + S-adenosyl-L-methionine = N(4)-methylcytidine(1402) in 16S rRNA + S-adenosyl-L-homocysteine + H(+). Functionally, specifically methylates the N4 position of cytidine in position 1402 (C1402) of 16S rRNA. This is Ribosomal RNA small subunit methyltransferase H from Yersinia enterocolitica serotype O:8 / biotype 1B (strain NCTC 13174 / 8081).